The sequence spans 407 residues: MEGESTLGVLSGFVLGALTFHHLNTDSDTEGFLLGEMKGEAKNSITDSQMDNVKVVYTIDIQKYIPCYRLFSFYNSLGEVNEHALKKVLSNVRKTVVGWYKFRRHSDQIMTFREQLLHRNLQTHLSSPELVFLLLTPSITTESCSTHCLEHALYKPQRGLFHRVPLVVTNLGMSDQLGYKTEPASCTSTVFSRAVRTHSSQFFNEDGSLKEVHKINEMYAAVQEELKSICQKVEQSEREVEKLLMDVNQLKEVRRTQQARATGAGEKNVQRNPQENILLCQALRTFFPESEVLHSCVISLKNRHISPSGCNVNHHVDVVDQLTLMVEYVYSPEASPVPTAQLRKRKALDTHDQGSVKRPRLLETESRPSVAASRSRHQDKASSSSLDIDIEMGSPEDDADYPRSPTF.

Residues 7–155 (LGVLSGFVLG…THCLEHALYK (149 aa)) enclose the MPN domain. Residue S48 is modified to Phosphoserine. The stretch at 209–259 (LKEVHKINEMYAAVQEELKSICQKVEQSEREVEKLLMDVNQLKEVRRTQQA) forms a coiled coil. The interval 344 to 407 (KRKALDTHDQ…DADYPRSPTF (64 aa)) is disordered. Positions 347 to 366 (ALDTHDQGSVKRPRLLETES) are enriched in basic and acidic residues. Phosphoserine is present on residues S384, S385, S394, and S404. A compositionally biased stretch (acidic residues) spans 388–399 (IDIEMGSPEDDA). The short motif at 404 to 407 (SPTF) is the pSXXF motif element.

This sequence belongs to the FAM175 family. Abraxas subfamily. As to quaternary structure, component of the ARISC complex, at least composed of UIMC1/RAP80, ABRAXAS1, BRCC3/BRCC36, BABAM2 and BABAM1/NBA1. Component of the BRCA1-A complex, at least composed of the BRCA1, BARD1, UIMC1/RAP80, ABRAXAS1, BRCC3/BRCC36, BABAM2 and BABAM1/NBA1. In the complex, interacts directly with UIMC1/RAP80, BRCC3/BRCC36 and BABAM2. Homodimer. Interacts directly (when phosphorylated at Ser-404) with BRCA1. The phosphorylated homodimer can interact directly with two BRCA1 chains, giving rise to a heterotetramer. Binds polyubiquitin. Post-translationally, phosphorylation of Ser-404 of the pSXXF motif by ATM or ATR constitutes a specific recognition motif for the BRCT domain of BRCA1.

Its subcellular location is the nucleus. Functionally, involved in DNA damage response and double-strand break (DSB) repair. Component of the BRCA1-A complex, acting as a central scaffold protein that assembles the various components of the complex and mediates the recruitment of BRCA1. The BRCA1-A complex specifically recognizes 'Lys-63'-linked ubiquitinated histones H2A and H2AX at DNA lesion sites, leading to target the BRCA1-BARD1 heterodimer to sites of DNA damage at DSBs. This complex also possesses deubiquitinase activity that specifically removes 'Lys-63'-linked ubiquitin on histones H2A and H2AX. The polypeptide is BRCA1-A complex subunit Abraxas 1 (Mus musculus (Mouse)).